The primary structure comprises 636 residues: MAKIVQLPDDLSNKIAAGEVVERPASVVKELVENAIDANSSVIEIDVEEAGLASIKVLDDGEGMDAEDCRTAFLRHATSKIKDENDLFRVRTLGFRGEALPSIASVSHLSIKTSTGEGAGTHLTLQGGRIISEQKAPSRRGTEITVTNLFFNTPARLKYMKTIHTELGNITDVVNRIALAHPEVSIRLRHQGKTLLQTNGNGDVRHVLAAIYGTAVAKKMLPLEARSLDFEVKGYIALPEITRASRNYMSSVVNGRYIKNFPLVKAIHEGYHTLLPIGRHPITFIEINMDPLLVDVNVHPSKLEVRLSKETELHELIRDAIKDVFKQQQLIPSVQVPKKTAPLINKPEQQKLDFDQVREPAPLSDSDVEREYKPEPSFSAMKLSSLVKDPPPSAPVEREENVMQDTEPEWPGAEEYTPEAAPAVQAEPEQAGENVQDEETPKERVPIMYPIGQMHGTYILAQNENGLYIIDQHAAQERIKYEYFREKVGEVESEVQDLLVPLTFHYSKNEALTIDQHLDDLAKVGVFLESFGAGSYIVRCHPTWFPKGEETTIIEDIIQQVLDDRTIDIKKLREEAAIMMSCKGSIKANHHLRDDEITALLDELRRTSDPFTCPHGRPIIIHYSTYEMEKMFKRVM.

Residues Ala-341 to Ala-420 are disordered. The span at Glu-348 to Arg-358 shows a compositional bias: basic and acidic residues.

It belongs to the DNA mismatch repair MutL/HexB family.

This protein is involved in the repair of mismatches in DNA. It is required for dam-dependent methyl-directed DNA mismatch repair. May act as a 'molecular matchmaker', a protein that promotes the formation of a stable complex between two or more DNA-binding proteins in an ATP-dependent manner without itself being part of a final effector complex. This is DNA mismatch repair protein MutL from Bacillus licheniformis (strain ATCC 14580 / DSM 13 / JCM 2505 / CCUG 7422 / NBRC 12200 / NCIMB 9375 / NCTC 10341 / NRRL NRS-1264 / Gibson 46).